A 442-amino-acid chain; its full sequence is Prenyltransferase nscD (442 aa).

This sequence belongs to the tryptophan dimethylallyltransferase family.

Its pathway is secondary metabolite biosynthesis. Functionally, prenyltransferase; part of the gene cluster that mediates the biosynthesis of neosartoricin B, a prenylated anthracenone that probably exhibits T-cell antiproliferative activity, suggestive of a physiological role as an immunosuppressive agent. The non-reducing polyketide synthase nscA probably synthesizes and cyclizes the decaketide backbone. The hydrolase nscB then mediates the product release through hydrolysis followed by spontaneous decarboxylation. The prenyltransferase nscD catalyzes the addition of the dimethylallyl group to the aromatic C5. The FAD-dependent monooxygenase nscC is then responsible for the stereospecific hydroxylation at C2. Neosartoricin B can be converted into two additional compounds neosartoricins C and D. Neosartoricin C is a spirocyclic compound that is cyclized through the attack of C3 hydroxyl on C14, followed by dehydration. On the other hand, neosartoricin D is a further cyclized compound in which attack of C2 on C14 in neosartoricin C results in the formation of the acetal-containing dioxabicyclo-octanone ring. Both of these compounds are novel and possibly represent related metabolites of the gene cluster. The chain is Prenyltransferase nscD from Trichophyton verrucosum (strain HKI 0517).